The following is a 283-amino-acid chain: tRNA-cytidine(32) 2-sulfurtransferase (283 aa).

The PP-loop motif motif lies at 37 to 42 (SGGKDS). Cys112, Cys115, and Cys203 together coordinate [4Fe-4S] cluster.

This sequence belongs to the TtcA family. As to quaternary structure, homodimer. Mg(2+) serves as cofactor. It depends on [4Fe-4S] cluster as a cofactor.

Its subcellular location is the cytoplasm. It catalyses the reaction cytidine(32) in tRNA + S-sulfanyl-L-cysteinyl-[cysteine desulfurase] + AH2 + ATP = 2-thiocytidine(32) in tRNA + L-cysteinyl-[cysteine desulfurase] + A + AMP + diphosphate + H(+). It participates in tRNA modification. Its function is as follows. Catalyzes the ATP-dependent 2-thiolation of cytidine in position 32 of tRNA, to form 2-thiocytidine (s(2)C32). The sulfur atoms are provided by the cysteine/cysteine desulfurase (IscS) system. In Legionella pneumophila (strain Paris), this protein is tRNA-cytidine(32) 2-sulfurtransferase.